Reading from the N-terminus, the 246-residue chain is MASLLSSSLPSCLPSLLFLLLQLTSSSAGQFRVIGPGHPIRALVGDEVELPCRISPGKNATGMEVGWYRPPFSRVVHLYRNGKDQDEEQAPEYRGRTQLLKETIGEGKVTLRIRNVRFSDEGGFTCFFRDHSYQEEAAMELKVEDPFYWINPGVLVLIAVLPVLLLQITVGLVFLCLQRRLRGKLWAEIENLHRTFDPHFLMVPCWKITLFVIVPVLGPLVALIICYNWLHRRLAGQFLEELRNPF.

An N-terminal signal peptide occupies residues 1 to 28 (MASLLSSSLPSCLPSLLFLLLQLTSSSA). The Ig-like V-type domain maps to 29 to 144 (GQFRVIGPGH…EEAAMELKVE (116 aa)). Over 29–153 (GQFRVIGPGH…EDPFYWINPG (125 aa)) the chain is Extracellular. An intrachain disulfide couples Cys-52 to Cys-126. An N-linked (GlcNAc...) asparagine glycan is attached at Asn-59. Residues 154 to 174 (VLVLIAVLPVLLLQITVGLVF) form a helical membrane-spanning segment. The Cytoplasmic segment spans residues 175–209 (LCLQRRLRGKLWAEIENLHRTFDPHFLMVPCWKIT). A helical transmembrane segment spans residues 210–230 (LFVIVPVLGPLVALIICYNWL). The Extracellular segment spans residues 231-246 (HRRLAGQFLEELRNPF).

Belongs to the immunoglobulin superfamily. BTN/MOG family. As to quaternary structure, homodimer. As to expression, found exclusively in the CNS, where it is localized on the surface of myelin and oligodendrocyte cytoplasmic membranes.

It localises to the membrane. Its function is as follows. Mediates homophilic cell-cell adhesion. Minor component of the myelin sheath. May be involved in completion and/or maintenance of the myelin sheath and in cell-cell communication. The chain is Myelin-oligodendrocyte glycoprotein (MOG) from Bos taurus (Bovine).